The chain runs to 109 residues: MDDSIDEEVISGGSTITVEFSGGAETLFGGVKEHIVPLDGSKIVLLEEMLRWLRDHLLTGDAGLFLQENTVRPGILVMINDTDWDLMGETEYILQPGDHILFISTLHGG.

Residue Gly109 is modified to 1-thioglycine. Gly109 participates in a covalent cross-link: Glycyl lysine isopeptide (Gly-Lys) (interchain with K-? in acceptor proteins).

The protein belongs to the URM1 family. C-terminal thiocarboxylation occurs in 2 steps, it is first acyl-adenylated (-COAMP) via the hesA/moeB/thiF part of the MOCS3 homolog, then thiocarboxylated (-COSH) via the rhodanese domain of the MOCS3 homolog.

It localises to the cytoplasm. It functions in the pathway tRNA modification; 5-methoxycarbonylmethyl-2-thiouridine-tRNA biosynthesis. Its function is as follows. Acts as a sulfur carrier required for 2-thiolation of mcm(5)S(2)U at tRNA wobble positions of cytosolic tRNA(Lys), tRNA(Glu) and tRNA(Gln). Serves as sulfur donor in tRNA 2-thiolation reaction by being thiocarboxylated (-COSH) at its C-terminus by MOCS3. The sulfur is then transferred to tRNA to form 2-thiolation of mcm(5)S(2)U. Also acts as a ubiquitin-like protein (UBL) that is covalently conjugated via an isopeptide bond to lysine residues of target proteins. The thiocarboxylated form serves as substrate for conjugation and oxidative stress specifically induces the formation of UBL-protein conjugates. The protein is Ubiquitin-related modifier 1 homolog of Anopheles gambiae (African malaria mosquito).